The following is a 157-amino-acid chain: Type II restriction enzyme PvuII (157 aa).

Positions 58 and 68 each coordinate Mg(2+).

As to quaternary structure, homodimer. It depends on Mg(2+) as a cofactor.

The catalysed reaction is Endonucleolytic cleavage of DNA to give specific double-stranded fragments with terminal 5'-phosphates.. Functionally, a P subtype restriction enzyme that recognizes the double-stranded sequence 5'-CAGCTG-3' and cleaves after G-3. The sequence is that of Type II restriction enzyme PvuII (pvuIIR) from Proteus hauseri.